A 505-amino-acid polypeptide reads, in one-letter code: Maturase K (505 aa).

It belongs to the intron maturase 2 family. MatK subfamily.

It localises to the plastid. It is found in the chloroplast. Its function is as follows. Usually encoded in the trnK tRNA gene intron. Probably assists in splicing its own and other chloroplast group II introns. The chain is Maturase K from Amaranthus greggii (Gregg's amaranth).